The sequence spans 486 residues: Katanin p60 ATPase-containing subunit A1 (486 aa).

Positions 103-174 (RSSPLPVRRP…NKAEVSEKEV (72 aa)) are disordered. Basic and acidic residues predominate over residues 143 to 174 (NGDRAKPLKGKEKKEAKPKDDKNKAEVSEKEV). Residue 244–251 (GPPGTGKT) participates in ATP binding.

Belongs to the AAA ATPase family. Katanin p60 subunit A1 subfamily. In terms of assembly, can homooligomerize into hexameric rings, which may be promoted by interaction with microtubules. Interacts with katnb1, which may serve as a targeting subunit.

The protein localises to the cytoplasm. Its subcellular location is the cytoskeleton. It is found in the microtubule organizing center. The protein resides in the centrosome. It localises to the spindle pole. The protein localises to the spindle. The enzyme catalyses n ATP + n H2O + a microtubule = n ADP + n phosphate + (n+1) alpha/beta tubulin heterodimers.. ATPase activity is stimulated by microtubules, which promote homooligomerization. ATP-dependent microtubule severing is stimulated by interaction with katnb1. Functionally, catalytic subunit of a complex which severs microtubules in an ATP-dependent manner. Microtubule severing may promote rapid reorganization of cellular microtubule arrays and the release of microtubules from the centrosome following nucleation. In Salmo salar (Atlantic salmon), this protein is Katanin p60 ATPase-containing subunit A1 (katna1).